A 175-amino-acid chain; its full sequence is Large ribosomal subunit protein uL10 (175 aa).

This sequence belongs to the universal ribosomal protein uL10 family. In terms of assembly, part of the ribosomal stalk of the 50S ribosomal subunit. The N-terminus interacts with L11 and the large rRNA to form the base of the stalk. The C-terminus forms an elongated spine to which L12 dimers bind in a sequential fashion forming a multimeric L10(L12)X complex.

In terms of biological role, forms part of the ribosomal stalk, playing a central role in the interaction of the ribosome with GTP-bound translation factors. This chain is Large ribosomal subunit protein uL10, found in Psychrobacter cryohalolentis (strain ATCC BAA-1226 / DSM 17306 / VKM B-2378 / K5).